We begin with the raw amino-acid sequence, 258 residues long: Pyridoxal phosphate homeostasis protein (258 aa).

At lysine 47 the chain carries N6-(pyridoxal phosphate)lysine.

It belongs to the pyridoxal phosphate-binding protein YggS/PROSC family.

Functionally, pyridoxal 5'-phosphate (PLP)-binding protein, which is involved in PLP homeostasis. This is Pyridoxal phosphate homeostasis protein from Mycobacterium bovis (strain ATCC BAA-935 / AF2122/97).